A 320-amino-acid polypeptide reads, in one-letter code: HPr kinase/phosphorylase (320 aa).

Catalysis depends on residues His141 and Lys162. 156–163 (GHSGLGKS) lines the ATP pocket. Residue Ser163 participates in Mg(2+) binding. Catalysis depends on Asp180, which acts as the Proton acceptor; for phosphorylation activity. Proton donor; for dephosphorylation activity. Positions 204–213 (LEVRGLGILN) are important for the catalytic mechanism of both phosphorylation and dephosphorylation. Mg(2+) is bound at residue Glu205. Arg248 is a catalytic residue. Residues 269 to 274 (PVAVGR) are important for the catalytic mechanism of dephosphorylation.

The protein belongs to the HPrK/P family. Homohexamer. Mg(2+) serves as cofactor.

The catalysed reaction is [HPr protein]-L-serine + ATP = [HPr protein]-O-phospho-L-serine + ADP + H(+). The enzyme catalyses [HPr protein]-O-phospho-L-serine + phosphate + H(+) = [HPr protein]-L-serine + diphosphate. Functionally, catalyzes the ATP- as well as the pyrophosphate-dependent phosphorylation of a specific serine residue in HPr, a phosphocarrier protein of the phosphoenolpyruvate-dependent sugar phosphotransferase system (PTS). HprK/P also catalyzes the pyrophosphate-producing, inorganic phosphate-dependent dephosphorylation (phosphorolysis) of seryl-phosphorylated HPr (P-Ser-HPr). The polypeptide is HPr kinase/phosphorylase (Neisseria gonorrhoeae (strain ATCC 700825 / FA 1090)).